The chain runs to 408 residues: Peptidase T (408 aa).

Residue His78 coordinates Zn(2+). Asp80 is an active-site residue. Residue Asp141 participates in Zn(2+) binding. Glu175 (proton acceptor) is an active-site residue. Residues Glu176, Asp198, and His380 each coordinate Zn(2+).

It belongs to the peptidase M20B family. Zn(2+) serves as cofactor.

The protein localises to the cytoplasm. The enzyme catalyses Release of the N-terminal residue from a tripeptide.. In terms of biological role, cleaves the N-terminal amino acid of tripeptides. The polypeptide is Peptidase T (Clostridium botulinum (strain 657 / Type Ba4)).